We begin with the raw amino-acid sequence, 351 residues long: C-X-C chemokine receptor type 1 (351 aa).

Over 1-44 (MAEAEYFIWTNPEGDFEKEFGNITGMLPTGDYFIPCKRVPITNR) the chain is Extracellular. A glycan (N-linked (GlcNAc...) asparagine) is linked at Asn-22. A helical membrane pass occupies residues 45–71 (QALVVFYALVSLLSLLGNSLVMLVILY). Over 72–80 (RRRTRSVMD) the chain is Cytoplasmic. The chain crosses the membrane as a helical span at residues 81–101 (VYVLNLAIADLLFSLTLPFLA). Over 102–116 (VSKLKGWIFGTPLCK) the chain is Extracellular. A disulfide bridge links Cys-115 with Cys-192. A helical transmembrane segment spans residues 117–138 (MVSLLKEFNFFSGILLLACISV). The Cytoplasmic portion of the chain corresponds to 139–159 (DRYLAIVHATRTLARKRYLVK). Residues 160 to 179 (FVCVGIWGLSLILSLPFAIF) traverse the membrane as a helical segment. The Extracellular segment spans residues 180-204 (RQAYKPFRSGTVCYEVLGEATTDFR). The chain crosses the membrane as a helical span at residues 205–225 (MTLRGLSHIFGFLLPLLTMLV). Over 226 to 247 (CYGLTLRMLFKTHMRQKHRAMG) the chain is Cytoplasmic. The chain crosses the membrane as a helical span at residues 248 to 269 (VIFAVVLVFLLCCLPYNLVLLS). Residues 270 to 290 (DTLLGAHLIEDTCERRNDIDQ) are Extracellular-facing. A helical membrane pass occupies residues 291 to 313 (ALYITEILGFSHSCLNPIIYAFV). Residues 314 to 351 (GQNFRHEFLKILANHGLVRKEVLTHRRVAFHTSLTAIY) lie on the Cytoplasmic side of the membrane.

It belongs to the G-protein coupled receptor 1 family. As to quaternary structure, interacts with IL8. Interacts with GNAI2.

The protein localises to the cell membrane. Functionally, receptor to interleukin-8, which is a powerful neutrophils chemotactic factor. Binding of IL-8 to the receptor causes activation of neutrophils. This response is mediated via a G-protein that activates a phosphatidylinositol-calcium second messenger system. This Mus musculus (Mouse) protein is C-X-C chemokine receptor type 1 (Cxcr1).